Consider the following 85-residue polypeptide: MASKASGGSTRNGRDSISKRLGVKRYDGQVVRAGNILVRQRGTKIYPGKNVGMGKDYTLFALIDGKVKFETSKGKKVVSVYPVET.

A compositionally biased stretch (polar residues) spans 1–11 (MASKASGGSTR). A disordered region spans residues 1–20 (MASKASGGSTRNGRDSISKR).

The protein belongs to the bacterial ribosomal protein bL27 family.

This Sulfurihydrogenibium sp. (strain YO3AOP1) protein is Large ribosomal subunit protein bL27.